The sequence spans 236 residues: 2,3,4,5-tetrahydropyridine-2,6-dicarboxylate N-acetyltransferase (236 aa).

The protein belongs to the transferase hexapeptide repeat family. DapH subfamily.

The enzyme catalyses (S)-2,3,4,5-tetrahydrodipicolinate + acetyl-CoA + H2O = L-2-acetamido-6-oxoheptanedioate + CoA. It functions in the pathway amino-acid biosynthesis; L-lysine biosynthesis via DAP pathway; LL-2,6-diaminopimelate from (S)-tetrahydrodipicolinate (acetylase route): step 1/3. In terms of biological role, catalyzes the transfer of an acetyl group from acetyl-CoA to tetrahydrodipicolinate. This Clostridium botulinum (strain Langeland / NCTC 10281 / Type F) protein is 2,3,4,5-tetrahydropyridine-2,6-dicarboxylate N-acetyltransferase.